The chain runs to 223 residues: Thiamine-phosphate synthase (223 aa).

Residues 37 to 41 and aspartate 72 contribute to the 4-amino-2-methyl-5-(diphosphooxymethyl)pyrimidine site; that span reads QFREK. Mg(2+) is bound by residues aspartate 73 and aspartate 92. Serine 110 lines the 4-amino-2-methyl-5-(diphosphooxymethyl)pyrimidine pocket. 136-138 serves as a coordination point for 2-[(2R,5Z)-2-carboxy-4-methylthiazol-5(2H)-ylidene]ethyl phosphate; that stretch reads TQS. Lysine 139 is a 4-amino-2-methyl-5-(diphosphooxymethyl)pyrimidine binding site. 2-[(2R,5Z)-2-carboxy-4-methylthiazol-5(2H)-ylidene]ethyl phosphate contacts are provided by residues glycine 168 and 188–189; that span reads IS.

The protein belongs to the thiamine-phosphate synthase family. Mg(2+) serves as cofactor.

The enzyme catalyses 2-[(2R,5Z)-2-carboxy-4-methylthiazol-5(2H)-ylidene]ethyl phosphate + 4-amino-2-methyl-5-(diphosphooxymethyl)pyrimidine + 2 H(+) = thiamine phosphate + CO2 + diphosphate. It carries out the reaction 2-(2-carboxy-4-methylthiazol-5-yl)ethyl phosphate + 4-amino-2-methyl-5-(diphosphooxymethyl)pyrimidine + 2 H(+) = thiamine phosphate + CO2 + diphosphate. It catalyses the reaction 4-methyl-5-(2-phosphooxyethyl)-thiazole + 4-amino-2-methyl-5-(diphosphooxymethyl)pyrimidine + H(+) = thiamine phosphate + diphosphate. The protein operates within cofactor biosynthesis; thiamine diphosphate biosynthesis; thiamine phosphate from 4-amino-2-methyl-5-diphosphomethylpyrimidine and 4-methyl-5-(2-phosphoethyl)-thiazole: step 1/1. Its function is as follows. Condenses 4-methyl-5-(beta-hydroxyethyl)thiazole monophosphate (THZ-P) and 2-methyl-4-amino-5-hydroxymethyl pyrimidine pyrophosphate (HMP-PP) to form thiamine monophosphate (TMP). In Streptococcus agalactiae serotype Ia (strain ATCC 27591 / A909 / CDC SS700), this protein is Thiamine-phosphate synthase.